Here is a 345-residue protein sequence, read N- to C-terminus: Erythronate-4-phosphate dehydrogenase (345 aa).

Residue S45 participates in substrate binding. Residues D146 and T174 each contribute to the NAD(+) site. The active site involves R207. D227 lines the NAD(+) pocket. E232 is a catalytic residue. H249 serves as the catalytic Proton donor. Residue G252 coordinates NAD(+).

It belongs to the D-isomer specific 2-hydroxyacid dehydrogenase family. PdxB subfamily. As to quaternary structure, homodimer.

Its subcellular location is the cytoplasm. The catalysed reaction is 4-phospho-D-erythronate + NAD(+) = (R)-3-hydroxy-2-oxo-4-phosphooxybutanoate + NADH + H(+). The protein operates within cofactor biosynthesis; pyridoxine 5'-phosphate biosynthesis; pyridoxine 5'-phosphate from D-erythrose 4-phosphate: step 2/5. In terms of biological role, catalyzes the oxidation of erythronate-4-phosphate to 3-hydroxy-2-oxo-4-phosphonooxybutanoate. This is Erythronate-4-phosphate dehydrogenase from Ruthia magnifica subsp. Calyptogena magnifica.